The sequence spans 424 residues: L-threonine:uridine-5'-aldehyde transaldolase (424 aa).

Lysine 235 carries the post-translational modification N6-(pyridoxal phosphate)lysine.

This sequence belongs to the SHMT family. Pyridoxal 5'-phosphate serves as cofactor.

It catalyses the reaction uridine-5'-aldehyde + L-threonine = (5'S,6'S)-C-glycyluridine + acetaldehyde. The protein operates within antibiotic biosynthesis. Functionally, transaldolase involved in the biosynthesis of the lipopeptidyl nucleoside antibiotic A-90289. Catalyzes the condensation of L-threonine and uridine-5'-aldehyde to form 5'-C-glycyluridine (GlyU). Forms (5'S,6'S)-GlyU. Has no activity with alternative amino acids, such as glycine or serine. This Streptomyces sp protein is L-threonine:uridine-5'-aldehyde transaldolase.